Consider the following 542-residue polypeptide: Thermosome subunit alpha (542 aa).

Belongs to the TCP-1 chaperonin family. Forms a Heterooligomeric complex of two stacked eight-membered rings.

In terms of biological role, molecular chaperone; binds unfolded polypeptides in vitro, and has a weak ATPase activity. This is Thermosome subunit alpha (thsA) from Methanothermobacter thermautotrophicus (strain ATCC 29096 / DSM 1053 / JCM 10044 / NBRC 100330 / Delta H) (Methanobacterium thermoautotrophicum).